The chain runs to 140 residues: Large ribosomal subunit protein bL17 (140 aa).

It belongs to the bacterial ribosomal protein bL17 family. Part of the 50S ribosomal subunit. Contacts protein L32.

The sequence is that of Large ribosomal subunit protein bL17 from Rhizobium etli (strain CIAT 652).